A 449-amino-acid chain; its full sequence is Deoxyguanosinetriphosphate triphosphohydrolase-like protein (449 aa).

The disordered stretch occupies residues 1 to 27 (MTSSVWQERRHGEDKQRRNDHRSPYQR). Residues 7–27 (QERRHGEDKQRRNDHRSPYQR) are compositionally biased toward basic and acidic residues. One can recognise an HD domain in the interval 59 to 255 (RLTHSLEVSQ…MELADDIAYA (197 aa)).

Belongs to the dGTPase family. Type 2 subfamily.

The sequence is that of Deoxyguanosinetriphosphate triphosphohydrolase-like protein from Shewanella baltica (strain OS185).